Here is a 253-residue protein sequence, read N- to C-terminus: Transcription factor bHLH106 (253 aa).

The bHLH domain occupies 66–115 (AALRNHKEAERRRRERINSHLNKLRNVLSCNSKTDKATLLAKVVQRVREL).

Homodimer.

It localises to the nucleus. This chain is Transcription factor bHLH106 (BHLH106), found in Arabidopsis thaliana (Mouse-ear cress).